Consider the following 222-residue polypeptide: Phosphoglycolate phosphatase (222 aa).

The active-site Nucleophile is the D8. D8 and D10 together coordinate Mg(2+). Residue K150 coordinates substrate. Residues D173 and D177 each coordinate Mg(2+).

The protein belongs to the archaeal SPP-like hydrolase family. Requires Mg(2+) as cofactor.

It carries out the reaction 2-phosphoglycolate + H2O = glycolate + phosphate. Its function is as follows. Catalyzes the dephosphorylation of 2-phosphoglycolate. This chain is Phosphoglycolate phosphatase, found in Metallosphaera sedula (strain ATCC 51363 / DSM 5348 / JCM 9185 / NBRC 15509 / TH2).